The following is a 327-amino-acid chain: Vacuolar protein sorting-associated protein 26A (327 aa).

The tract at residues 306-327 (RTNFHQRFESPDSQASAEQPEM) is disordered. The residue at position 315 (serine 315) is a Phosphoserine. The span at 316 to 327 (PDSQASAEQPEM) shows a compositional bias: polar residues.

The protein belongs to the VPS26 family. Component of the heterotrimeric retromer cargo-selective complex (CSC), also described as vacuolar protein sorting subcomplex (VPS), formed by VPS26 (VPS26A or VPS26B), VPS29 and VPS35. The CSC has a highly elongated structure with VPS26 and VPS29 binding independently at opposite distal ends of VPS35 as central platform. The CSC is believed to associate with variable sorting nexins to form functionally distinct retromer complex variants. The originally described retromer complex (also called SNX-BAR retromer) is a pentamer containing the CSC and a heterodimeric membrane-deforming subcomplex formed between SNX1 or SNX2 and SNX5 or SNX6 (also called SNX-BAR subcomplex); the respective CSC and SNX-BAR subcomplexes associate with low affinity. The CSC associates with SNX3 to form a SNX3-retromer complex. The CSC associates with SNX27, the WASH complex and the SNX-BAR subcomplex to form the SNX27-retromer complex. Interacts with VPS29, VPS35, SNX27. Interacts with SNX1, SNX2, SNX5, SNX6, SNX3, RAB7A, ECPAS, EHD1, WASHC5, SORL1.

It is found in the cytoplasm. The protein resides in the endosome membrane. Its subcellular location is the early endosome. Acts as a component of the retromer cargo-selective complex (CSC). The CSC is believed to be the core functional component of retromer or respective retromer complex variants acting to prevent missorting of selected transmembrane cargo proteins into the lysosomal degradation pathway. The recruitment of the CSC to the endosomal membrane involves RAB7A and SNX3. The SNX-BAR retromer mediates retrograde transport of cargo proteins from endosomes to the trans-Golgi network (TGN) and is involved in endosome-to-plasma membrane transport for cargo protein recycling. The SNX3-retromer mediates the retrograde endosome-to-TGN transport of WLS distinct from the SNX-BAR retromer pathway. The SNX27-retromer is believed to be involved in endosome-to-plasma membrane trafficking and recycling of a broad spectrum of cargo proteins. The CSC complex seems to act as recruitment hub for other proteins, such as the WASH complex and TBC1D5. Required for retrograde transport of lysosomal enzyme receptor IGF2R. Required to regulate transcytosis of the polymeric immunoglobulin receptor (pIgR-pIgA). Required for the endosomal localization of WASHC2 (indicative for the WASH complex). Required for the endosomal localization of TBC1D5. Mediates retromer cargo recognition of SORL1 and is involved in trafficking of SORL1 implicated in sorting and processing of APP. Involved in retromer-independent lysosomal sorting of F2R. Involved in recycling of ADRB2. Acts redundantly with VSP26B in SNX-27 mediated endocytic recycling of SLC2A1/GLUT1. Enhances the affinity of SNX27 for PDZ-binding motifs in cargo proteins. The polypeptide is Vacuolar protein sorting-associated protein 26A (Vps26a) (Mus musculus (Mouse)).